The primary structure comprises 413 residues: Phosphopentomutase (413 aa).

Positions 11, 306, 311, 347, 348, and 359 each coordinate Mn(2+).

The protein belongs to the phosphopentomutase family. Requires Mn(2+) as cofactor.

It is found in the cytoplasm. It carries out the reaction 2-deoxy-alpha-D-ribose 1-phosphate = 2-deoxy-D-ribose 5-phosphate. The catalysed reaction is alpha-D-ribose 1-phosphate = D-ribose 5-phosphate. The protein operates within carbohydrate degradation; 2-deoxy-D-ribose 1-phosphate degradation; D-glyceraldehyde 3-phosphate and acetaldehyde from 2-deoxy-alpha-D-ribose 1-phosphate: step 1/2. Isomerase that catalyzes the conversion of deoxy-ribose 1-phosphate (dRib-1-P) and ribose 1-phosphate (Rib-1-P) to deoxy-ribose 5-phosphate (dRib-5-P) and ribose 5-phosphate (Rib-5-P), respectively. This chain is Phosphopentomutase, found in Helicobacter pylori (strain G27).